The primary structure comprises 497 residues: MANYILSLDQGTTSSRAILFTREGDIKQIAQKEFTQIYPQPGWVEHNANEIFDTQSYVMRECLQFAGVDASDVAAIGITNQRETTVVWDKKTGAPIHNAIVWQDRRTAGFCDELKAKGLADVIRQKTGLVIDAYFSGTKVRWILDNVPGAREKADKGELLFGTIDSWLIWNLTKGAVHVTDESNASRTLLFNINTGAWDDELLAIIGVPAAMLPRVSKSSEVVGEIHPEFLGKALPIAGNAGDQQAATYGNACLKEGMAKNTYGTGCFMLMNTGKAPRPSNNNLLTTMAWATPSGRYFALEGSVFIAGAVVQWLRDGLGIIQSAPEVEQLALSVPDNGGVFLVPAFAGLGAPHWDQYARGAMVGITRGATKAHIARAALESIALQTLDIMDCMQKDAGIKLDTLRADGGATRNNLLMQFQADVLGVPVERPMVTETTALGAAYLAGLAVGFWKSEEEIAAMWQLDRRFEPNMAQSDRDKLLHDWQRAVARSKAWIEA.

ADP is bound at residue Thr12. Residues Thr12, Thr13, and Ser14 each coordinate ATP. Thr12 serves as a coordination point for sn-glycerol 3-phosphate. ADP is bound at residue Arg16. Sn-glycerol 3-phosphate-binding residues include Arg82, Glu83, Tyr134, and Asp243. Glycerol contacts are provided by Arg82, Glu83, Tyr134, Asp243, and Gln244. ADP is bound by residues Thr265 and Gly308. ATP contacts are provided by Thr265, Gly308, Gln312, and Gly409. Gly409 and Asn413 together coordinate ADP.

Belongs to the FGGY kinase family.

The enzyme catalyses glycerol + ATP = sn-glycerol 3-phosphate + ADP + H(+). It functions in the pathway polyol metabolism; glycerol degradation via glycerol kinase pathway; sn-glycerol 3-phosphate from glycerol: step 1/1. Its activity is regulated as follows. Inhibited by fructose 1,6-bisphosphate (FBP). Functionally, key enzyme in the regulation of glycerol uptake and metabolism. Catalyzes the phosphorylation of glycerol to yield sn-glycerol 3-phosphate. The sequence is that of Glycerol kinase from Solidesulfovibrio magneticus (strain ATCC 700980 / DSM 13731 / RS-1) (Desulfovibrio magneticus).